The chain runs to 1447 residues: Sister chromatid cohesion protein PDS5 homolog B (1447 aa).

Residues 383–419 (LLVNDHLLNFVRERTLDKRWRVRKEAMMGLAQIYKKY) form an HEAT repeat. Positions 1117–1447 (KSFFTPGKPK…RRRSAKRERR (331 aa)) are disordered. The residue at position 1136 (Lys1136) is an N6-acetyllysine. Positions 1137–1155 (PLSSAGKQSQTKSSRMETV) are enriched in polar residues. Ser1140, Ser1162, Ser1166, Ser1176, Ser1182, and Ser1191 each carry phosphoserine. Low complexity predominate over residues 1156–1167 (SNASSSSNPSSP). Residues 1172–1184 (GRLDSSEMDHSEN) are compositionally biased toward basic and acidic residues. Composition is skewed to basic and acidic residues over residues 1196-1214 (KKSD…LEKP) and 1225-1243 (QEEK…EQKP). Residues 1245–1254 (GSQRSRKRGH) show a composition bias toward basic residues. A DNA-binding region (a.T hook 1) is located at residues 1249–1261 (SRKRGHTASESDE). Thr1255 is subject to Phosphothreonine. 2 positions are modified to phosphoserine: Ser1257 and Ser1259. Basic and acidic residues predominate over residues 1265 to 1274 (PEEKRLKEDI). Ser1283 bears the Phosphoserine mark. A DNA-binding region (a.T hook 2) is located at residues 1287–1299 (KGKRGRPPKPLGG). Residues 1310–1319 (TSKKGSKKKS) show a composition bias toward basic residues. A phosphoserine mark is found at Ser1319 and Ser1334. Over residues 1342–1353 (KSKQHRVSRRAQ) the composition is skewed to basic residues. The span at 1355–1372 (RAESPESSAIESTQSTPQ) shows a compositional bias: polar residues. A phosphoserine mark is found at Ser1358 and Ser1366. Thr1367 is modified (phosphothreonine). At Ser1369 the chain carries Phosphoserine. 2 positions are modified to phosphothreonine: Thr1370 and Thr1381. Positions 1372 to 1384 (QKGRGRPSKTPSP) form a DNA-binding region, a.T hook 3. Over residues 1379 to 1388 (SKTPSPSQPK) the composition is skewed to low complexity. Phosphoserine is present on residues Ser1383 and Ser1417. A compositionally biased stretch (acidic residues) spans 1422-1432 (IPQEETEEEEV). Over residues 1437–1447 (VRRRSAKRERR) the composition is skewed to basic residues.

The protein belongs to the PDS5 family. In terms of assembly, interacts with the cohesin complex. Interacts with RAD21; the interaction is direct. Interacts with WAPL (via FGF motifs) or CDCA5 (via the FGF motif); the interaction is direct, cohesin-dependent and competitive. As to expression, widely expressed.

The protein localises to the nucleus. Regulator of sister chromatid cohesion in mitosis which may stabilize cohesin complex association with chromatin. May couple sister chromatid cohesion during mitosis to DNA replication. Cohesion ensures that chromosome partitioning is accurate in both meiotic and mitotic cells and plays an important role in DNA repair. Plays a role in androgen-induced proliferative arrest in prostate cells. The chain is Sister chromatid cohesion protein PDS5 homolog B (PDS5B) from Homo sapiens (Human).